Consider the following 433-residue polypeptide: Myricetin 3-O-glucosyl 1,2-rhamnoside 6'-O-caffeoyltransferase AT2 (433 aa).

Active-site proton acceptor residues include H157 and D375.

Belongs to the plant acyltransferase family. Expressed in young cromes.

The enzyme catalyses myricetin 3-O-[beta-D-glucosyl-(1-&gt;2)-alpha-L-rhamnoside] + (E)-caffeoyl-CoA = myricetin 3-O-[(6-O-(E)-caffeoyl-beta-D-glucosyl)-(1-&gt;2)-alpha-L-rhamnoside] + CoA. It participates in flavonoid metabolism. Caffeoyltransferase involved in montbretin A (MbA) biosynthesis. Catalyzes the caffeoylation of myricetin 3-O-beta-D-glucosyl 1,2-alpha-L-rhamnoside (MRG) to produce myricetin 3-O-(6'-O-caffeoyl)-beta-D-glucosyl 1,2-alpha-L-rhamnoside (mini-MbA), a precursor of MbA. Mini-MbA and MbA are potent inhibitors of human pancreatic alpha-amylase and are being developed as drug candidates to treat type-2 diabetes. In vitro, is able to catalyze the caffeoylation of quercetin 3-O-sophoroside (QGG), although QGG may not be a physiological substrate in vivo. In vitro, can use coumaryl-CoA, feruloyl-CoA and acetyl-CoA, although these three acyl donors may not be physiological in vivo. This Crocosmia x crocosmiiflora (Montbretia) protein is Myricetin 3-O-glucosyl 1,2-rhamnoside 6'-O-caffeoyltransferase AT2.